Consider the following 288-residue polypeptide: Homoserine kinase (288 aa).

78 to 88 (PLARGLGSSSS) contacts ATP.

This sequence belongs to the GHMP kinase family. Homoserine kinase subfamily.

The protein resides in the cytoplasm. It catalyses the reaction L-homoserine + ATP = O-phospho-L-homoserine + ADP + H(+). The protein operates within amino-acid biosynthesis; L-threonine biosynthesis; L-threonine from L-aspartate: step 4/5. Functionally, catalyzes the ATP-dependent phosphorylation of L-homoserine to L-homoserine phosphate. The sequence is that of Homoserine kinase from Streptococcus mutans serotype c (strain ATCC 700610 / UA159).